Consider the following 290-residue polypeptide: Transposon Ty3-I Gag polyprotein (290 aa).

Ser2 carries the N-acetylserine modification. The segment at 265 to 282 (RLCFYCKKEGHRLNECRA) adopts a CCHC-type zinc-finger fold.

Its subcellular location is the cytoplasm. Functionally, capsid protein (CA) is the structural component of the virus-like particle (VLP), forming the shell that encapsulates the retrotransposons dimeric RNA genome. In terms of biological role, nucleocapsid protein p9 (NC) forms the nucleocore that coats the retro-elements dimeric RNA. Binds these RNAs through its zinc fingers. Promotes primer tRNA(i)-Met annealing to the multipartite primer-binding site (PBS), dimerization of Ty3 RNA and initiation of reverse transcription. The protein is Transposon Ty3-I Gag polyprotein (TY3A-I) of Saccharomyces cerevisiae (strain ATCC 204508 / S288c) (Baker's yeast).